Here is a 333-residue protein sequence, read N- to C-terminus: Fructose-1,6-bisphosphatase class 1 (333 aa).

Glu92, Asp113, Leu115, and Asp116 together coordinate Mg(2+). Substrate-binding positions include 116-119 (DGSS), Asn209, Tyr242, and Lys272. Residue Glu278 participates in Mg(2+) binding.

It belongs to the FBPase class 1 family. In terms of assembly, homotetramer. It depends on Mg(2+) as a cofactor.

Its subcellular location is the cytoplasm. The enzyme catalyses beta-D-fructose 1,6-bisphosphate + H2O = beta-D-fructose 6-phosphate + phosphate. It functions in the pathway carbohydrate biosynthesis; Calvin cycle. In Chlorobium phaeovibrioides (strain DSM 265 / 1930) (Prosthecochloris vibrioformis (strain DSM 265)), this protein is Fructose-1,6-bisphosphatase class 1.